The primary structure comprises 188 residues: Calcium load-activated calcium channel (188 aa).

Residues M1 to M4 are Lumenal-facing. A helical membrane pass occupies residues F5–R32. A coiled-coil region spans residues R32–K89. The Cytoplasmic segment spans residues T33–V86. The chain crosses the membrane as a helical span at residues R87–N106. The Lumenal portion of the chain corresponds to S107–V120. Residues P121–H130 lie within the membrane without spanning it. Residues R131 to D140 are Lumenal-facing. Residues C141–L162 form a helical membrane-spanning segment. The Cytoplasmic segment spans residues G163–S188.

This sequence belongs to the TMCO1 family. Homodimer and homotetramer. Component of the multi-pass translocon (MPT) complex.

The protein resides in the endoplasmic reticulum membrane. It localises to the golgi apparatus membrane. Its function is as follows. Calcium-selective channel required to prevent calcium stores from overfilling, thereby playing a key role in calcium homeostasis. In response to endoplasmic reticulum (ER) overloading, assembles into a homotetramer, forming a functional calcium-selective channel, regulating the calcium content in endoplasmic reticulum store. Component of the multi-pass translocon (MPT) complex that mediates insertion of multi-pass membrane proteins into the lipid bilayer of membranes. The sequence is that of Calcium load-activated calcium channel from Danio rerio (Zebrafish).